A 380-amino-acid chain; its full sequence is Erythronate-4-phosphate dehydrogenase (380 aa).

Substrate-binding residues include Ser-45 and Thr-66. NAD(+) contacts are provided by residues 126 to 127, Asp-146, Thr-174, 205 to 207, and Asp-231; these read QV and ASR. Arg-207 is a catalytic residue. Glu-236 is an active-site residue. The active-site Proton donor is His-253. Gly-256 serves as a coordination point for NAD(+). Tyr-257 serves as a coordination point for substrate.

This sequence belongs to the D-isomer specific 2-hydroxyacid dehydrogenase family. PdxB subfamily. In terms of assembly, homodimer.

It is found in the cytoplasm. The enzyme catalyses 4-phospho-D-erythronate + NAD(+) = (R)-3-hydroxy-2-oxo-4-phosphooxybutanoate + NADH + H(+). The protein operates within cofactor biosynthesis; pyridoxine 5'-phosphate biosynthesis; pyridoxine 5'-phosphate from D-erythrose 4-phosphate: step 2/5. Catalyzes the oxidation of erythronate-4-phosphate to 3-hydroxy-2-oxo-4-phosphonooxybutanoate. The protein is Erythronate-4-phosphate dehydrogenase of Pseudomonas syringae pv. tomato (strain ATCC BAA-871 / DC3000).